The sequence spans 186 residues: Akirin-1 (186 aa).

The tract at residues 1–64 (MACGATLKRS…PLPQLGGDRR (64 aa)) is disordered. Positions 22–27 (PKRRRC) match the Nuclear localization signal motif. Residues 49–60 (QQGQQQPLPQLG) show a composition bias toward low complexity. Positions 183–186 (SYVS) match the SYVS motif motif.

Belongs to the akirin family.

It localises to the nucleus. In terms of biological role, molecular adapter that acts as a bridge between proteins, and which is involved skeletal muscle development. Functions as a signal transducer for MSTN during skeletal muscle regeneration and myogenesis. This chain is Akirin-1, found in Xenopus tropicalis (Western clawed frog).